A 290-amino-acid polypeptide reads, in one-letter code: PIH1 domain-containing protein 1 (290 aa).

Phosphoserine is present on residues Ser-12 and Ser-173.

Belongs to the PIH1 family. In terms of assembly, component of the R2TP complex composed at least of RUVBL1, RUVBL2, RPAP3 and PIHD1. Component of the PAQosome complex which is responsible for the biogenesis of several protein complexes and which consists of R2TP complex members RUVBL1, RUVBL2, RPAP3 and PIH1D1, URI complex members PFDN2, PFDN6, PDRG1, UXT and URI1 as well as ASDURF, POLR2E and DNAAF10/WDR92. Interacts with phosphorylated TELO2 and mediates interaction of TELO2 with the R2TP complex. Interacts with phosphorylated ECD, EFTUD2/SNRP116, RPB1 and UBR5 and with RPB1 in a phosphorylation-independent manner. Interacts with the core C/D box snoRNP particle components NOP58 and FBL and with RUVBL1/TIP49. Interacts with RPAP3 and DNAAF10. Interacts with histone H4 and with SWI/SNF complex member SMARCB1/SNF5. Interacts with the mTORC1 complex member RPTOR. Interacts with MSL1. Expressed at low levels in normal mammary epithelial cells (at protein level). Highest expression in lung, leukocyte and placenta. Expressed at lower levels in brain, prostate, colon, heart, small intestine, liver, ovary, pancreas, skeletal muscle, spleen, testis and thymus.

It localises to the nucleus. Functionally, involved in the assembly of C/D box small nucleolar ribonucleoprotein (snoRNP) particles. Recruits the SWI/SNF complex to the core promoter of rRNA genes and enhances pre-rRNA transcription. Mediates interaction of TELO2 with the R2TP complex which is necessary for the stability of MTOR and SMG1. Positively regulates the assembly and activity of the mTORC1 complex. In Homo sapiens (Human), this protein is PIH1 domain-containing protein 1 (PIH1D1).